We begin with the raw amino-acid sequence, 541 residues long: Calcium-dependent protein kinase 25 (541 aa).

Residues 1–11 (MGQCCTGGGKA) show a composition bias toward gly residues. The tract at residues 1–74 (MGQCCTGGGK…AGPIGEVLER (74 aa)) is disordered. Residue G2 is the site of N-myristoyl glycine attachment. Residues 38–67 (AKQQPCSPAAKAAATEAAAAASSSKKPAGP) show a composition bias toward low complexity. The Protein kinase domain occupies 83–341 (YSIGKELGRG…AFQVLNHPWI (259 aa)). ATP is bound by residues 89-97 (LGRGQFGVT) and K112. The active-site Proton acceptor is the D207. The segment at 347 to 377 (APDVPLDNVVLNRLKQFRAMNQFKKAALRII) is autoinhibitory domain. EF-hand domains lie at 384–419 (EEIK…QGTK), 420–455 (FSDN…MNKM), 456–491 (DREE…QGLY), and 493–526 (ANEI…GSGC). The Ca(2+) site is built by D397, D399, S401, T403, E408, D433, D435, N437, E444, D469, D471, S473, Y475, E480, D504, N506, D508, R510, and E515.

The protein belongs to the protein kinase superfamily. Ser/Thr protein kinase family. CDPK subfamily. As to expression, specifically expressed in heading panicles, spikelets and mature pollen grains. Not expressed in vegetative tissues.

It localises to the membrane. The enzyme catalyses L-seryl-[protein] + ATP = O-phospho-L-seryl-[protein] + ADP + H(+). It catalyses the reaction L-threonyl-[protein] + ATP = O-phospho-L-threonyl-[protein] + ADP + H(+). With respect to regulation, activated by calcium. Autophosphorylation may play an important role in the regulation of the kinase activity. Functionally, may play a role in signal transduction pathways that involve calcium as a second messenger. In Oryza sativa subsp. japonica (Rice), this protein is Calcium-dependent protein kinase 25.